A 556-amino-acid polypeptide reads, in one-letter code: MARFGLPALLCTLAVLSAALLAAELKSKSCSEVRRLYVSKGFNKNDAPLHEINGDHLKICPQGSTCCSQEMEEKYSLQSKDDFKSVVSEQCNHLQAVFASRYKKFDEFFKELLENAEKSLNDMFVKTYGHLYMQNSELFKDLFVELKRYYVVGNVNLEEMLNDFWARLLERMFRLVNSQYHFTDEYLECVSKYTEQLKPFGDVPRKLKLQVTRAFVAARTFAQGLAVAGDVVSKVSVVNPTAQCTHALLKMIYCSHCRGLVTVKPCYNYCSNIMRGCLANQGDLDFEWNNFIDAMLMVAERLEGPFNIESVMDPIDVKISDAIMNMQDNSVQVSQKVFQGCGPPKPLPAGRISRSISESAFSARFRPHHPEERPTTAAGTSLDRLVTDVKEKLKQAKKFWSSLPSNVCNDERMAAGNGNEDDCWNGKGKSRYLFAVTGNGLANQGNNPEVQVDTSKPDILILRQIMALRVMTSKMKNAYNGNDVDFFDISDESSGEGSGSGCEYQQCPSEFDYNATDHAGKSANEKADSAGVRPGAQAYLLTVFCILFLVMQREWR.

Positions Met-1–Ala-18 are cleaved as a signal peptide. Ser-357 bears the Phosphoserine mark. O-linked (Xyl...) (glycosaminoglycan) serine glycosylation is found at Ser-494, Ser-498, and Ser-500. Asn-514 carries an N-linked (GlcNAc...) asparagine glycan. Ser-529 carries GPI-anchor amidated serine lipidation. A propeptide spans Ala-530 to Arg-556 (removed in mature form).

Belongs to the glypican family.

It localises to the cell membrane. It is found in the secreted. The protein localises to the extracellular space. Functionally, cell surface proteoglycan that bears heparan sulfate. May be involved in the development of kidney tubules and of the central nervous system. In Homo sapiens (Human), this protein is Glypican-4 (GPC4).